A 352-amino-acid polypeptide reads, in one-letter code: Thymidine kinase (352 aa).

32–39 lines the ATP pocket; that stretch reads GVYGIGKS. Residue Glu60 is the Proton acceptor of the active site. Substrate-binding residues include Tyr78, Gln102, Phe105, and Phe148. Arg192 lines the ATP pocket. Substrate is bound at residue Arg198.

It belongs to the herpesviridae thymidine kinase family. In terms of assembly, homodimer.

The enzyme catalyses thymidine + ATP = dTMP + ADP + H(+). Functionally, catalyzes the transfer of the gamma-phospho group of ATP to thymidine to generate dTMP in the salvage pathway of pyrimidine synthesis. The dTMP serves as a substrate for DNA polymerase during viral DNA replication. Allows the virus to be reactivated and to grow in non-proliferative cells lacking a high concentration of phosphorylated nucleic acid precursors. This chain is Thymidine kinase, found in Equine herpesvirus 4 (strain 1942) (EHV-4).